Consider the following 273-residue polypeptide: Glutamate racemase (273 aa).

Residues 11–12 (DS) and 43–44 (YG) each bind substrate. Cys-74 acts as the Proton donor/acceptor in catalysis. Residue 75–76 (NT) participates in substrate binding. Cys-185 functions as the Proton donor/acceptor in the catalytic mechanism. Substrate is bound at residue 186–187 (TH).

The protein belongs to the aspartate/glutamate racemases family. Homodimer.

The catalysed reaction is L-glutamate = D-glutamate. The protein operates within cell wall biogenesis; peptidoglycan biosynthesis. In terms of biological role, provides the (R)-glutamate required for cell wall biosynthesis. The chain is Glutamate racemase from Enterococcus faecalis (strain ATCC 700802 / V583).